The following is a 770-amino-acid chain: Lysine-specific histone demethylase 1 (770 aa).

A disordered region spans residues methionine 1–proline 21. An SWIRM domain is found at leucine 28–isoleucine 126. Valine 137–alanine 165 contacts FAD. A disordered region spans residues asparagine 718–isoleucine 739.

The protein belongs to the flavin monoamine oxidase family. In terms of assembly, probably part of a large repressor complex. Interacts with CoREST protein spr-1. Interacts with chromobox protein homolog hpl-1. Requires FAD as cofactor.

Its subcellular location is the nucleus. It catalyses the reaction N(6),N(6)-dimethyl-L-lysyl(4)-[histone H3] + 2 A + 2 H2O = L-lysyl(4)-[histone H3] + 2 formaldehyde + 2 AH2. Functionally, histone demethylase that specifically demethylates 'Lys-4' of histone H3, a specific tag for epigenetic transcriptional activation, thereby acting as a corepressor. Acts by oxidizing the substrate by FAD to generate the corresponding imine that is subsequently hydrolyzed. Demethylates both mono- and di-methylated 'Lys-4' of histone H3. May be involved in H3 demethylation in mitotic cells including gut and embryonic cells. Participates in the transcriptional repression of the presenilin protein hop-1. May act via the formation of a multiprotein complex that remodel or modify the chromatin. Together with met-2, set-17 and set-26, required for transgenerational fertility. Plays a role in developmental growth and lifespan regulation in response to ultraviolet-induced damage. This is Lysine-specific histone demethylase 1 from Caenorhabditis elegans.